Reading from the N-terminus, the 394-residue chain is RILP-like protein 1 (394 aa).

The RH1 domain maps to 2-89 (EGISALEKNV…RLERMDRIEK (88 aa)). Residues 68 to 312 (EMEELRLELD…KVFMLQEELA (245 aa)) adopt a coiled-coil conformation. In terms of domain architecture, RH2 spans 282 to 347 (RPRFTLQELR…IPQESGIKRL (66 aa)). Positions 318 to 337 (EADEEHKLPQSSPVIDSKAP) are disordered.

The protein belongs to the RILPL family.

The protein resides in the cytoplasm. It localises to the cytosol. Its subcellular location is the cytoskeleton. The protein localises to the microtubule organizing center. It is found in the centrosome. The protein resides in the cell projection. It localises to the cilium. Its function is as follows. Plays a role in the regulation of cell shape and polarity. Plays a role in cellular protein transport, including protein transport away from primary cilia. Neuroprotective protein. The chain is RILP-like protein 1 (rilpl1) from Xenopus tropicalis (Western clawed frog).